Consider the following 358-residue polypeptide: Aromatic amino acid aminotransferase (358 aa).

Lysine 214 is modified (N6-(pyridoxal phosphate)lysine).

Belongs to the class-II pyridoxal-phosphate-dependent aminotransferase family. Homodimer. Requires pyridoxal 5'-phosphate as cofactor.

The catalysed reaction is an aromatic L-alpha-amino acid + 2-oxoglutarate = an aromatic oxo-acid + L-glutamate. Aminotransferase that catalyzes the conversion of aromatic amino acids and 2-oxoglutarate into corresponding aromatic oxo acids and L-glutamate. This Rhodococcus jostii (strain RHA1) protein is Aromatic amino acid aminotransferase.